The primary structure comprises 348 residues: NADH-cytochrome b5 reductase 2 (348 aa).

The helical transmembrane segment at 41–61 threads the bilayer; that stretch reads TLLYGAAAAAVAGAGYYFLGG. The 106-residue stretch at 97–202 folds into the FAD-binding FR-type domain; it reads QGWVSLKLEE…KGPLPKYPWT (106 aa). 205-240 contributes to the FAD binding site; sequence KHGHIALVAGGTGITPMFQLCRAIFNNPDDQTKVTL.

Belongs to the flavoprotein pyridine nucleotide cytochrome reductase family. It depends on FAD as a cofactor.

Its subcellular location is the mitochondrion outer membrane. The enzyme catalyses 2 Fe(III)-[cytochrome b5] + NADH = 2 Fe(II)-[cytochrome b5] + NAD(+) + H(+). Its function is as follows. May mediate the reduction of outer membrane cytochrome b5. In Chaetomium globosum (strain ATCC 6205 / CBS 148.51 / DSM 1962 / NBRC 6347 / NRRL 1970) (Soil fungus), this protein is NADH-cytochrome b5 reductase 2 (MCR1).